We begin with the raw amino-acid sequence, 151 residues long: 3-dehydroquinate dehydratase (151 aa).

Tyrosine 26 serves as the catalytic Proton acceptor. Positions 77, 83, and 90 each coordinate substrate. Residue histidine 103 is the Proton donor of the active site. Substrate is bound by residues 104–105 (LS) and arginine 114.

Belongs to the type-II 3-dehydroquinase family. As to quaternary structure, homododecamer.

It carries out the reaction 3-dehydroquinate = 3-dehydroshikimate + H2O. The protein operates within metabolic intermediate biosynthesis; chorismate biosynthesis; chorismate from D-erythrose 4-phosphate and phosphoenolpyruvate: step 3/7. In terms of biological role, catalyzes a trans-dehydration via an enolate intermediate. The chain is 3-dehydroquinate dehydratase from Pelodictyon phaeoclathratiforme (strain DSM 5477 / BU-1).